The following is a 126-amino-acid chain: Large-conductance mechanosensitive channel (126 aa).

3 helical membrane-spanning segments follow: residues 14-34 (VIDL…VTSL), 40-60 (MPLL…FTFV), and 67-87 (GLFI…FLFI).

Belongs to the MscL family. In terms of assembly, homopentamer.

It is found in the cell membrane. Its function is as follows. Channel that opens in response to stretch forces in the membrane lipid bilayer. May participate in the regulation of osmotic pressure changes within the cell. The polypeptide is Large-conductance mechanosensitive channel (Bacillus licheniformis (strain ATCC 14580 / DSM 13 / JCM 2505 / CCUG 7422 / NBRC 12200 / NCIMB 9375 / NCTC 10341 / NRRL NRS-1264 / Gibson 46)).